A 735-amino-acid chain; its full sequence is Protein PAT1 homolog 2 (735 aa).

2 disordered regions span residues 39–93 (TFGL…REVK) and 336–366 (QLHP…PDPY). Composition is skewed to basic and acidic residues over residues 49 to 59 (EPTKQEEDHKK) and 67 to 93 (PKIE…REVK). Residues 346-356 (SQRQRPQSSSR) are compositionally biased toward low complexity.

Belongs to the PAT1 family. Interacts with ribonucleoprotein complex components. Interacts with cpeb.

Its subcellular location is the cytoplasm. It is found in the nucleus. Functionally, RNA-binding protein that acts as a translational repressor. In Xenopus tropicalis (Western clawed frog), this protein is Protein PAT1 homolog 2 (patl2).